Consider the following 1258-residue polypeptide: Regulator of G-protein signaling 22 (1258 aa).

A disordered region spans residues 581–604 (QQLGRSEPLNAVSSKDGGLEKGSK). RGS domains lie at 845–973 (TFTD…ASRQ) and 1014–1138 (AFRK…TDEK). Residues 1145–1172 (RRQEHKQKRKASDTEEDKAGKSGVKQYA) are disordered. Positions 1154–1164 (KASDTEEDKAG) are enriched in basic and acidic residues.

As to quaternary structure, interacts with GNA11, GNA12 and GNA13. As to expression, expressed testis, including in Leydig cells and spermatogenic cells from the spermatogonia to spermatid stages (at protein level).

The protein localises to the cytoplasm. The protein resides in the nucleus. Inhibits signal transduction by increasing the GTPase activity of G protein alpha subunits thereby driving them into their inactive GDP-bound form. This chain is Regulator of G-protein signaling 22 (Rgs22), found in Mus musculus (Mouse).